The sequence spans 668 residues: UvrABC system protein B (668 aa).

The 152-residue stretch at 25 to 176 (THLQSGHSRQ…DQRQLLRNLA (152 aa)) folds into the Helicase ATP-binding domain. 38-45 (GATGTGKT) is a binding site for ATP. The Beta-hairpin signature appears at 91 to 114 (YYDYYQPEAYIPVTDTFIEKTASI). The Helicase C-terminal domain occupies 429–591 (QVDDLLAEIQ…ITPQPVKKGS (163 aa)). A UVR domain is found at 626–661 (PELITQLEAQMKEAAKNLEFEEAAKYRDRIKNLRSK).

The protein belongs to the UvrB family. In terms of assembly, forms a heterotetramer with UvrA during the search for lesions. Interacts with UvrC in an incision complex.

The protein localises to the cytoplasm. In terms of biological role, the UvrABC repair system catalyzes the recognition and processing of DNA lesions. A damage recognition complex composed of 2 UvrA and 2 UvrB subunits scans DNA for abnormalities. Upon binding of the UvrA(2)B(2) complex to a putative damaged site, the DNA wraps around one UvrB monomer. DNA wrap is dependent on ATP binding by UvrB and probably causes local melting of the DNA helix, facilitating insertion of UvrB beta-hairpin between the DNA strands. Then UvrB probes one DNA strand for the presence of a lesion. If a lesion is found the UvrA subunits dissociate and the UvrB-DNA preincision complex is formed. This complex is subsequently bound by UvrC and the second UvrB is released. If no lesion is found, the DNA wraps around the other UvrB subunit that will check the other stand for damage. This Acaryochloris marina (strain MBIC 11017) protein is UvrABC system protein B.